A 191-amino-acid polypeptide reads, in one-letter code: Leucyl/phenylalanyl-tRNA--protein transferase (191 aa).

Belongs to the L/F-transferase family.

It is found in the cytoplasm. It carries out the reaction N-terminal L-lysyl-[protein] + L-leucyl-tRNA(Leu) = N-terminal L-leucyl-L-lysyl-[protein] + tRNA(Leu) + H(+). The catalysed reaction is N-terminal L-arginyl-[protein] + L-leucyl-tRNA(Leu) = N-terminal L-leucyl-L-arginyl-[protein] + tRNA(Leu) + H(+). It catalyses the reaction L-phenylalanyl-tRNA(Phe) + an N-terminal L-alpha-aminoacyl-[protein] = an N-terminal L-phenylalanyl-L-alpha-aminoacyl-[protein] + tRNA(Phe). In terms of biological role, functions in the N-end rule pathway of protein degradation where it conjugates Leu, Phe and, less efficiently, Met from aminoacyl-tRNAs to the N-termini of proteins containing an N-terminal arginine or lysine. The protein is Leucyl/phenylalanyl-tRNA--protein transferase of Gloeothece citriformis (strain PCC 7424) (Cyanothece sp. (strain PCC 7424)).